Here is a 66-residue protein sequence, read N- to C-terminus: U-limacoditoxin(59)-Dv128 (66 aa).

The N-terminal stretch at M1–A20 is a signal peptide. The tract at residues T21 to S66 is 3 X 16 AA tandem repeats of [FI]-G-G-G-L-G-G-A-V-G-G-R-R-R-R-D. 2 consecutive repeat copies span residues F22–D37 and I38–D53. Residue G31 is modified to Glycine amide. A propeptide spanning residues R33–D37 is cleaved from the precursor. Position 47 is a glycine amide (G47). Residues R49–D53 constitute a propeptide that is removed on maturation. The stretch at I54 to G64 is one 3; half-length repeat.

Belongs to the limacoditoxin-59 family. Expressed by the venom secretory cell of the spine. The spine is a cuticular structure containing a single large nucleated venom-secreting cell at its base. It is an independent unit capable of producing, storing and injecting venom. On the back of D.vulnerans caterpillars, spines are grouped together by 50 to 100 to form scoli, of which there are eight in D.vulnerans.

Its subcellular location is the secreted. Functionally, probable toxin. The chain is U-limacoditoxin(59)-Dv128 from Doratifera vulnerans (Mottled cup moth).